We begin with the raw amino-acid sequence, 418 residues long: Equilibrative nucleotide transporter 3 (418 aa).

The next 11 membrane-spanning stretches (helical) occupy residues 20-40 (MVVC…MLTI), 56-76 (VLTL…AYHE), 86-106 (LIGY…DLAT), 112-132 (IGPY…DATV), 142-162 (LMCP…GALT), 186-206 (MFLA…AYVF), 264-284 (YAVN…GFLY), 291-311 (GLGD…DLVG), 326-346 (KLIT…YFTA), 353-373 (WMIM…VCIM), and 392-412 (LVIF…LWLI).

This sequence belongs to the SLC29A/ENT transporter (TC 2.A.57) family. In terms of tissue distribution, expressed in root tips, vasculature of roots and leaves, and meristems of leaf primordia. Expressed in flowers and siliques.

It localises to the cell membrane. Functionally, nucleoside transporter that functions as a pyrimidine nucleoside carrier in all organs. Has high affinity for adenosine and uridine when expressed in a heterologous system (yeast). Mediates proton-dependent adenosine or uridine transport in Xenopus oocytes. The protein is Equilibrative nucleotide transporter 3 of Arabidopsis thaliana (Mouse-ear cress).